The sequence spans 504 residues: MDKFQSYLGLDRSHYFLYPLIFQEYIYVLAHDHGLNGSVLLENAGYDNKSSLLIVKRLIIRMYQQNHLILSVNDSKQTPFLGHNKNFYSQVMSEVSSTIMEIPLSLRLISSLERKGVVKSDNLRSIHSIFSFLEDNFSHLNYVLDILIPYPAHMEILVQALRYWIKDASSLHLLRFFLHECHNWDSLITSNSKKAGSSFSKRNHRLFFFLYTSYVCEYESGFLFLRNQSSHLRSTSSGSLIERIYFYGKIEYLAEVFAGAFQANLWLFKDSFMHYVRYQGKSILASKGTFILMNKWKYYFVNFWKSYFYLWSQPGRIYINQLSNHSLDFLGYRSSVRLKPSMVRGQMLENTFLIDNAIKKFDSIVPIMPLVGSLAKSKFCNALGHPIGKAVWADLSDSDIIERFGRIYRNLSHYHSGSSKKKSLYRVKYILRLSCARTLARKHKSTVRAFLKRFGSRLLEEFFTEEEQVFSLTFPRVSSISRRLSRRRIWYLDIVCINDLANHE.

Belongs to the intron maturase 2 family. MatK subfamily.

The protein localises to the plastid. The protein resides in the chloroplast. Functionally, usually encoded in the trnK tRNA gene intron. Probably assists in splicing its own and other chloroplast group II introns. The chain is Maturase K from Guizotia abyssinica (Niger).